The sequence spans 621 residues: (-)-beta-phellandrene synthase 1, chloroplastic (621 aa).

A chloroplast-targeting transit peptide spans 1–49 (MALALVSVAPLVSMRRSLFSSPYELKSIDKTIPNLVMCRKRMSGTPSIR). 3 residues coordinate Mg(2+): Asp372, Asp376, and Asp524. Positions 372-376 (DDIYD) match the DDXXD motif motif.

Belongs to the terpene synthase family. Tpsd subfamily. Requires Mg(2+) as cofactor. Mn(2+) is required as a cofactor.

Its subcellular location is the plastid. The protein resides in the chloroplast. The catalysed reaction is (2E)-geranyl diphosphate = (-)-beta-phellandrene + diphosphate. It functions in the pathway terpene metabolism; oleoresin biosynthesis. It participates in secondary metabolite biosynthesis; terpenoid biosynthesis. In terms of biological role, monoterpene synthase (TPS) involved in the biosynthesis of monoterpene natural products included in conifer oleoresin secretions and volatile emissions; these compounds contribute to biotic and abiotic stress defense against herbivores and pathogens. Catalyzes the conversion of (2E)-geranyl diphosphate (GPP) to (-)-beta-phellandrene and, to a lower extent, to (-)-alpha-phellandrene. The polypeptide is (-)-beta-phellandrene synthase 1, chloroplastic (Pinus contorta (Shore pine)).